We begin with the raw amino-acid sequence, 192 residues long: Transcription termination/antitermination protein NusG (192 aa).

Residues 140 to 168 (VGEVVTVTDGPFETFMGTVEEIDKERNRL) form the KOW domain.

The protein belongs to the NusG family.

Its function is as follows. Participates in transcription elongation, termination and antitermination. The chain is Transcription termination/antitermination protein NusG from Rickettsia typhi (strain ATCC VR-144 / Wilmington).